Reading from the N-terminus, the 272-residue chain is NADH-cytochrome b5 reductase 3 (272 aa).

Residues 11 to 123 form the FAD-binding FR-type domain; that stretch reads DIKYPLRLID…RGPNGLLVYQ (113 aa). An N6-acetyllysine modification is found at Lys13. Tyr14 carries the post-translational modification Phosphotyrosine. An N6-acetyllysine modification is found at Lys21. FAD-binding residues include Arg63, Pro64, Tyr65, Val80, Lys82, and Tyr84. N6-acetyllysine is present on Lys91. Residues Lys97, Met98, Ser99, and Thr156 each contribute to the FAD site.

This sequence belongs to the flavoprotein pyridine nucleotide cytochrome reductase family. As to quaternary structure, component of a complex composed of cytochrome b5, NADH-cytochrome b5 reductase (CYB5R3) and MTARC2. Interacts with MTLN; the interaction is required to maintain cellular lipid composition and leads to stimulation of mitochondrial respiratory complex I activity. FAD is required as a cofactor.

The protein resides in the endoplasmic reticulum membrane. It localises to the mitochondrion outer membrane. The catalysed reaction is 2 Fe(III)-[cytochrome b5] + NADH = 2 Fe(II)-[cytochrome b5] + NAD(+) + H(+). Its function is as follows. Catalyzes the reduction of two molecules of cytochrome b5 using NADH as the electron donor. The chain is NADH-cytochrome b5 reductase 3 (CYB5R3) from Sus scrofa (Pig).